Reading from the N-terminus, the 444-residue chain is Cobyrinate a,c-diamide synthase (444 aa).

The region spanning Ile-250 to Lys-438 is the GATase cobBQ-type domain. Residue Cys-332 is the Nucleophile of the active site.

Belongs to the CobB/CbiA family. Mg(2+) serves as cofactor.

It catalyses the reaction cob(II)yrinate + 2 L-glutamine + 2 ATP + 2 H2O = cob(II)yrinate a,c diamide + 2 L-glutamate + 2 ADP + 2 phosphate + 2 H(+). The protein operates within cofactor biosynthesis; adenosylcobalamin biosynthesis; cob(II)yrinate a,c-diamide from sirohydrochlorin (anaerobic route): step 10/10. Catalyzes the ATP-dependent amidation of the two carboxylate groups at positions a and c of cobyrinate, using either L-glutamine or ammonia as the nitrogen source. This Fusobacterium nucleatum subsp. nucleatum (strain ATCC 25586 / DSM 15643 / BCRC 10681 / CIP 101130 / JCM 8532 / KCTC 2640 / LMG 13131 / VPI 4355) protein is Cobyrinate a,c-diamide synthase.